We begin with the raw amino-acid sequence, 568 residues long: Malate synthase, glyoxysomal (568 aa).

The interval 1 to 20 is disordered; the sequence is MGSLGMYSESGLTKKGSSRG. Residue Arg183 is the Proton acceptor of the active site. Asp469 functions as the Proton donor in the catalytic mechanism. The Microbody targeting signal motif lies at 566 to 568; the sequence is SKL.

This sequence belongs to the malate synthase family.

It localises to the glyoxysome. It carries out the reaction glyoxylate + acetyl-CoA + H2O = (S)-malate + CoA + H(+). It participates in carbohydrate metabolism; glyoxylate cycle; (S)-malate from isocitrate: step 2/2. The protein is Malate synthase, glyoxysomal of Cucumis sativus (Cucumber).